The chain runs to 165 residues: Protein SprT (165 aa).

Residues 10–157 form the SprT-like domain; it reads EACYRQAEDF…YCRRCKATLV (148 aa). His-69 contacts Zn(2+). Residue Glu-70 is part of the active site. His-73 serves as a coordination point for Zn(2+).

It belongs to the SprT family. Requires Zn(2+) as cofactor.

It localises to the cytoplasm. The chain is Protein SprT from Pseudomonas paraeruginosa (strain DSM 24068 / PA7) (Pseudomonas aeruginosa (strain PA7)).